The sequence spans 141 residues: MAARLCCQLDPARDVLLLRPFGSQSSGPPFPRPSAGSAASPASSLSASDESDLPLGRLPACFASASGPCCLVVTCAELRTMDSTVNFVSWHANRQLGMPSKDLWTPYIRDQLLTKWEEGSIDPRLSIFVLGGCRHKCMRLP.

The segment covering 24 to 48 (QSSGPPFPRPSAGSAASPASSLSAS) has biased composition (low complexity). The interval 24 to 51 (QSSGPPFPRPSAGSAASPASSLSASDES) is disordered. The interval 68–113 (PCCLVVTCAELRTMDSTVNFVSWHANRQLGMPSKDLWTPYIRDQLL) is mitochondrial targeting sequence.

It belongs to the orthohepadnavirus protein X family. As to quaternary structure, may form homodimer. May interact with host CEBPA, CFLAR, CREB1, DDB1, E4F1, HBXIP, HSPD1/HSP60, NFKBIA, POLR2E and SMAD4. Interacts with host SMC5-SMC6 complex and induces its degradation. Interacts with host TRPC4AP; leading to prevent ubiquitination of TRPC4AP. Interacts with host PLSCR1; this interaction promotes ubiquitination and degradation of HBx and impairs HBx-mediated cell proliferation. In terms of processing, a fraction may be phosphorylated in insect cells and HepG2 cells, a human hepatoblastoma cell line. Phosphorylated in vitro by host protein kinase C or mitogen-activated protein kinase. N-acetylated in insect cells.

It is found in the host cytoplasm. Its subcellular location is the host nucleus. The protein resides in the host mitochondrion. Multifunctional protein that plays a role in silencing host antiviral defenses and promoting viral transcription. Does not seem to be essential for HBV infection. May be directly involved in development of cirrhosis and liver cancer (hepatocellular carcinoma). Most of cytosolic activities involve modulation of cytosolic calcium. The effect on apoptosis is controversial depending on the cell types in which the studies have been conducted. May induce apoptosis by localizing in mitochondria and causing loss of mitochondrial membrane potential. May also modulate apoptosis by binding host CFLAR, a key regulator of the death-inducing signaling complex (DISC). Promotes viral transcription by using the host E3 ubiquitin ligase DDB1 to target the SMC5-SMC6 complex to proteasomal degradation. This host complex would otherwise bind to viral episomal DNA, and prevents its transcription. Moderately stimulates transcription of many different viral and cellular transcription elements. Promoters and enhancers stimulated by HBx contain DNA binding sites for NF-kappa-B, AP-1, AP-2, c-EBP, ATF/CREB, or the calcium-activated factor NF-AT. The protein is Protein X of Woodchuck hepatitis B virus (isolate 1) (WHV).